A 326-amino-acid chain; its full sequence is Thioredoxin reductase (326 aa).

55-62 (EGPEPGGQ) provides a ligand contact to FAD. An intrachain disulfide couples C156 to C159. 298–307 (DVSNKLYAQA) contributes to the FAD binding site.

This sequence belongs to the class-II pyridine nucleotide-disulfide oxidoreductase family. Homodimer. FAD serves as cofactor.

Its subcellular location is the cytoplasm. The enzyme catalyses [thioredoxin]-dithiol + NADP(+) = [thioredoxin]-disulfide + NADPH + H(+). This is Thioredoxin reductase (trxB) from Borreliella burgdorferi (strain ATCC 35210 / DSM 4680 / CIP 102532 / B31) (Borrelia burgdorferi).